The following is a 232-amino-acid chain: Protein UL24 homolog (232 aa).

Residues 191 to 232 (PQKELFGIHKPENSEVETVGATKSTRKGAEKSRLSRRSRKSN) form a disordered region.

It belongs to the herpesviridae UL24 family.

The protein localises to the virion. It localises to the host cytoplasm. Its subcellular location is the host nucleus. The protein resides in the host nucleolus. It is found in the host Golgi apparatus. Its function is as follows. May participate in nuclear egress of viral particles. Plays a role in the dispersal of several host nucleolar proteins including NCL/nucleolin and NPM1. Since deletion of host NCL/nucleolin negatively impact on nuclear egress, UL24 supposedly acts on this process through its effect on host nucleoli. The sequence is that of Protein UL24 homolog from Elephas maximus (Indian elephant).